The chain runs to 301 residues: Oxygen-dependent coproporphyrinogen-III oxidase (301 aa).

Residues 49–58 (VMVDGAVIEK) are important for dimerization. Serine 93 serves as a coordination point for substrate. Histidine 107 serves as the catalytic Proton donor. Substrate contacts are provided by residues 109-111 (NVR) and 259-261 (GGR). An important for dimerization region spans residues 241–276 (YAEFNLVIDRGTKFGLQSGGRTESILISLPPRARWG).

This sequence belongs to the aerobic coproporphyrinogen-III oxidase family. As to quaternary structure, homodimer.

The protein resides in the cytoplasm. The catalysed reaction is coproporphyrinogen III + O2 + 2 H(+) = protoporphyrinogen IX + 2 CO2 + 2 H2O. It participates in porphyrin-containing compound metabolism; protoporphyrin-IX biosynthesis; protoporphyrinogen-IX from coproporphyrinogen-III (O2 route): step 1/1. In terms of biological role, involved in the heme biosynthesis. Catalyzes the aerobic oxidative decarboxylation of propionate groups of rings A and B of coproporphyrinogen-III to yield the vinyl groups in protoporphyrinogen-IX. This Leishmania major protein is Oxygen-dependent coproporphyrinogen-III oxidase.